The primary structure comprises 358 residues: Histidinol-phosphate aminotransferase (358 aa).

The residue at position 221 (K221) is an N6-(pyridoxal phosphate)lysine.

It belongs to the class-II pyridoxal-phosphate-dependent aminotransferase family. Histidinol-phosphate aminotransferase subfamily. In terms of assembly, homodimer. Pyridoxal 5'-phosphate is required as a cofactor.

The enzyme catalyses L-histidinol phosphate + 2-oxoglutarate = 3-(imidazol-4-yl)-2-oxopropyl phosphate + L-glutamate. The protein operates within amino-acid biosynthesis; L-histidine biosynthesis; L-histidine from 5-phospho-alpha-D-ribose 1-diphosphate: step 7/9. The chain is Histidinol-phosphate aminotransferase from Caldicellulosiruptor saccharolyticus (strain ATCC 43494 / DSM 8903 / Tp8T 6331).